Here is a 402-residue protein sequence, read N- to C-terminus: Putative F-box protein At3g23960 (402 aa).

Positions 1 to 23 are disordered; that stretch reads MRSRQLHNVSEDRETLSRRNKRS. Positions 26 to 73 constitute an F-box domain; the sequence is SLNGHIPIDLLIEIFLKLPVKSIATCRSVSKFWTYVLGRQDFTELFLT.

In Arabidopsis thaliana (Mouse-ear cress), this protein is Putative F-box protein At3g23960.